We begin with the raw amino-acid sequence, 279 residues long: HTH-type transcriptional regulator HdfR (279 aa).

Residues 1–58 (MDTELLKTFLEVSRTRHFGRAAESLYLTQSAVSFRIRQLENQLGVNLFTRHRNNIRLT) form the HTH lysR-type domain. A DNA-binding region (H-T-H motif) is located at residues 18–37 (FGRAAESLYLTQSAVSFRIR).

It belongs to the LysR transcriptional regulatory family.

In terms of biological role, negatively regulates the transcription of the flagellar master operon flhDC by binding to the upstream region of the operon. The sequence is that of HTH-type transcriptional regulator HdfR from Escherichia coli O17:K52:H18 (strain UMN026 / ExPEC).